Consider the following 273-residue polypeptide: Non-homologous end joining protein Ku (273 aa).

Residues 13–190 enclose the Ku domain; the sequence is KLSLVTCPVA…FTGIEKKSDA (178 aa). Positions 227-251 are disordered; sequence KKKAKKPSKAKASKSTKGDDEEKSN. Residues 228–240 show a composition bias toward basic residues; that stretch reads KKAKKPSKAKASK.

It belongs to the prokaryotic Ku family. In terms of assembly, homodimer. Interacts with LigD.

Functionally, with LigD forms a non-homologous end joining (NHEJ) DNA repair enzyme, which repairs dsDNA breaks with reduced fidelity. Binds linear dsDNA with 5'- and 3'- overhangs but not closed circular dsDNA nor ssDNA. Recruits and stimulates the ligase activity of LigD. The sequence is that of Non-homologous end joining protein Ku from Allorhizobium ampelinum (strain ATCC BAA-846 / DSM 112012 / S4) (Agrobacterium vitis (strain S4)).